A 560-amino-acid polypeptide reads, in one-letter code: OTU domain-containing protein 5-A (560 aa).

Disordered stretches follow at residues 1-100 (MTIL…MACV) and 141-190 (GGGT…QSED). Residues 17–32 (DHPDDPDRRTGSDPHQ) show a composition bias toward basic and acidic residues. Gly residues predominate over residues 141 to 163 (GGGTGPGAAGGGGGGGGGGGVGG). In terms of domain architecture, OTU spans 211–334 (FVIKKMKEDG…NIHYNSVVNP (124 aa)). A cys-loop region spans residues 216–222 (MKEDGAC). The active site involves Asp-219. The Nucleophile role is filled by Cys-222. Positions 271–281 (KRKNNCHGNHI) are variable-loop. The tract at residues 322 to 327 (YHRNIH) is his-loop. The active site involves His-327. A disordered region spans residues 411 to 496 (ARQPRKASAT…ACVGPDRPTS (86 aa)). 2 stretches are compositionally biased toward low complexity: residues 417–430 (ASATCSSATAAASS) and 437–448 (ARSPRQRSSAPS).

This sequence belongs to the peptidase C85 family.

The enzyme catalyses Thiol-dependent hydrolysis of ester, thioester, amide, peptide and isopeptide bonds formed by the C-terminal Gly of ubiquitin (a 76-residue protein attached to proteins as an intracellular targeting signal).. Deubiquitinating enzyme that may function as negative regulator of the innate immune system. Has peptidase activity towards 'Lys-48'- and 'Lys-63'-linked polyubiquitin chains. Can also cleave 'Lys-11'-linked ubiquitin chains (in vitro). This is OTU domain-containing protein 5-A (otud5a) from Danio rerio (Zebrafish).